A 300-amino-acid chain; its full sequence is Light-independent protochlorophyllide reductase iron-sulfur ATP-binding protein (300 aa).

Residues 10–15 (GIGKST) and Lys-39 each bind ATP. Ser-14 serves as a coordination point for Mg(2+). Positions 95 and 129 each coordinate [4Fe-4S] cluster. 180–181 (NR) is an ATP binding site.

This sequence belongs to the NifH/BchL/ChlL family. As to quaternary structure, homodimer. Protochlorophyllide reductase is composed of three subunits; ChlL, ChlN and ChlB. [4Fe-4S] cluster serves as cofactor.

The protein localises to the plastid. It localises to the chloroplast. The catalysed reaction is chlorophyllide a + oxidized 2[4Fe-4S]-[ferredoxin] + 2 ADP + 2 phosphate = protochlorophyllide a + reduced 2[4Fe-4S]-[ferredoxin] + 2 ATP + 2 H2O. It participates in porphyrin-containing compound metabolism; chlorophyll biosynthesis (light-independent). Functionally, component of the dark-operative protochlorophyllide reductase (DPOR) that uses Mg-ATP and reduced ferredoxin to reduce ring D of protochlorophyllide (Pchlide) to form chlorophyllide a (Chlide). This reaction is light-independent. The L component serves as a unique electron donor to the NB-component of the complex, and binds Mg-ATP. This chain is Light-independent protochlorophyllide reductase iron-sulfur ATP-binding protein, found in Auxenochlorella protothecoides (Green microalga).